Consider the following 105-residue polypeptide: Cortistatin (105 aa).

Positions 1–18 are cleaved as a signal peptide; sequence MPLSPGLLLLLLSGATAT. The propeptide occupies 19–74; it reads AALPLEGGPTGRDSEHMQEAAGIRKSSLLTFLAWWFEWTSQASAGPLIGEEAREVA. Cys93 and Cys104 are joined by a disulfide.

It belongs to the somatostatin family. As to expression, expressed in a subset of GABAergic cells in the cortex and hippocampus.

The protein localises to the secreted. Binds to all human somatostatin receptor (SSTR) subtypes. It also inhibits cAMP production induced by forskolin through SSTRs. The protein is Cortistatin (CORT) of Homo sapiens (Human).